The chain runs to 116 residues: Large ribosomal subunit protein bL19 (116 aa).

Belongs to the bacterial ribosomal protein bL19 family.

Its function is as follows. This protein is located at the 30S-50S ribosomal subunit interface and may play a role in the structure and function of the aminoacyl-tRNA binding site. The chain is Large ribosomal subunit protein bL19 from Pseudomonas fluorescens (strain Pf0-1).